Here is a 476-residue protein sequence, read N- to C-terminus: Protein transport protein Sec61 subunit alpha isoform A (476 aa).

The Cytoplasmic portion of the chain corresponds to 2-33; sequence GIKFLEVIKPFCAVLPEIQKPERKIQFREKVL. The helical transmembrane segment at 34–53 threads the bilayer; sequence WTAITLFIFLVCCQIPLFGI. Over 54–76 the chain is Lumenal; that stretch reads MSSDSADPFYWMRVILASNRGTL. Residues 77–96 form a helical membrane-spanning segment; that stretch reads MELGISPIVTSGLIMQLLAG. Topologically, residues 97–117 are cytoplasmic; that stretch reads AKIIEVGDTPKDRALFNGAQK. A helical transmembrane segment spans residues 118 to 138; sequence LFGMIITIGQSIVYVMTGMYG. The Lumenal portion of the chain corresponds to 139–144; it reads DPSEMG. A helical membrane pass occupies residues 145 to 165; the sequence is AGICLLIIIQLFVAGLIVLLL. The Cytoplasmic segment spans residues 166–172; the sequence is DELLQKG. A helical membrane pass occupies residues 173-193; sequence YGLGSGISLFIATNICETIVW. Residues 194 to 240 lie on the Lumenal side of the membrane; the sequence is KAFSPTTVNTGRGTEFEGAIIALFHLLATRTDKVRALREAFYRQNLP. A helical membrane pass occupies residues 241–261; sequence NLLNLIATVFVFAVVIYFQGF. Topologically, residues 262 to 288 are cytoplasmic; the sequence is RVDLPIKSARYRGQYNTYPIKLFYTSN. The helical transmembrane segment at 289-309 threads the bilayer; it reads IPIILQSALVSNLYVISQMLS. The Lumenal portion of the chain corresponds to 310 to 354; that stretch reads TRFSGNFLVNLLGTWSDTSTGGPARAYPVGGLCYFLSPPESFGSV. A helical transmembrane segment spans residues 355–375; the sequence is LDDPIHAAIYIVFMLGSCAFF. Residues 376 to 420 lie on the Cytoplasmic side of the membrane; the sequence is SKTWIEVSGSSAKDVAKQLKEQQMVMGGHRETSMVHELNRYIPTA. Residues 421–441 traverse the membrane as a helical segment; that stretch reads AAFGGLCIGGLSVMADFLGAI. The Lumenal segment spans residues 442-445; sequence GSGT. A helical transmembrane segment spans residues 446–462; that stretch reads GILLAVTIIYQYFEIFV. Topologically, residues 463-476 are cytoplasmic; sequence KEQSEMGSMGALLF.

This sequence belongs to the SecY/SEC61-alpha family. The SEC61 channel-forming translocon complex consists of channel-forming core components SEC61A1, SEC61B and SEC61G and different auxiliary components such as SEC62 and SEC63. The SEC61 channel associates with the multi-pass translocon (MPT) complex.

It localises to the endoplasmic reticulum membrane. In terms of biological role, component of SEC61 channel-forming translocon complex that mediates transport of signal peptide-containing precursor polypeptides across the endoplasmic reticulum (ER). Forms a ribosome receptor and a gated pore in the ER membrane, both functions required for cotranslational translocation of nascent polypeptides. May cooperate with auxiliary protein SEC62, SEC63 and HSPA5/BiP to enable post-translational transport of small presecretory proteins. The SEC61 channel is also involved in ER membrane insertion of transmembrane proteins: it mediates membrane insertion of the first few transmembrane segments of proteins, while insertion of subsequent transmembrane regions of multi-pass membrane proteins is mediated by the multi-pass translocon (MPT) complex. This is Protein transport protein Sec61 subunit alpha isoform A (sec61aa) from Oncorhynchus mykiss (Rainbow trout).